The chain runs to 125 residues: Small ribosomal subunit protein uS13 (125 aa).

Belongs to the universal ribosomal protein uS13 family. Part of the 30S ribosomal subunit. Forms a loose heterodimer with protein S19. Forms two bridges to the 50S subunit in the 70S ribosome.

In terms of biological role, located at the top of the head of the 30S subunit, it contacts several helices of the 16S rRNA. In the 70S ribosome it contacts the 23S rRNA (bridge B1a) and protein L5 of the 50S subunit (bridge B1b), connecting the 2 subunits; these bridges are implicated in subunit movement. Contacts the tRNAs in the A and P-sites. In Rickettsia bellii (strain OSU 85-389), this protein is Small ribosomal subunit protein uS13.